The sequence spans 126 residues: UPF0102 protein Mlg_2205 (126 aa).

Belongs to the UPF0102 family.

The protein is UPF0102 protein Mlg_2205 of Alkalilimnicola ehrlichii (strain ATCC BAA-1101 / DSM 17681 / MLHE-1).